The primary structure comprises 295 residues: ATP synthase gamma chain (295 aa).

This sequence belongs to the ATPase gamma chain family. As to quaternary structure, F-type ATPases have 2 components, CF(1) - the catalytic core - and CF(0) - the membrane proton channel. CF(1) has five subunits: alpha(3), beta(3), gamma(1), delta(1), epsilon(1). CF(0) has three main subunits: a, b and c.

The protein localises to the cell membrane. Functionally, produces ATP from ADP in the presence of a proton gradient across the membrane. The gamma chain is believed to be important in regulating ATPase activity and the flow of protons through the CF(0) complex. This Desulforudis audaxviator (strain MP104C) protein is ATP synthase gamma chain.